Reading from the N-terminus, the 595-residue chain is Adenine deaminase 3 (595 aa).

Belongs to the metallo-dependent hydrolases superfamily. Adenine deaminase family. Requires Mn(2+) as cofactor.

It carries out the reaction adenine + H2O + H(+) = hypoxanthine + NH4(+). The protein is Adenine deaminase 3 of Rhizobium meliloti (strain 1021) (Ensifer meliloti).